Reading from the N-terminus, the 76-residue chain is MATGTPAHEFRELDNAELENRLKDAKEELFNLRFQKATGQLTNNRRIGTVKRDIARIYTVLRERELGLSVAPGAEA.

It belongs to the universal ribosomal protein uL29 family.

In Corynebacterium aurimucosum (strain ATCC 700975 / DSM 44827 / CIP 107346 / CN-1) (Corynebacterium nigricans), this protein is Large ribosomal subunit protein uL29.